A 624-amino-acid chain; its full sequence is Chaperone protein HtpG (624 aa).

Residues 1–336 (MKGQETRGFQ…SNDLPLNVSR (336 aa)) are a; substrate-binding. The interval 337 to 552 (EILQDSTVTR…ADEMSTQMAK (216 aa)) is b. The interval 553-624 (LFAAAGQSVP…IRRMNQLLVS (72 aa)) is c.

This sequence belongs to the heat shock protein 90 family. In terms of assembly, homodimer.

It localises to the cytoplasm. Its function is as follows. Molecular chaperone. Has ATPase activity. In Salmonella paratyphi A (strain ATCC 9150 / SARB42), this protein is Chaperone protein HtpG.